Consider the following 274-residue polypeptide: MGARRATYWAVLDTLVVGYALLPVLWIFSLSLKPTSTVKDGKLIPSTVTFDNYRGIFRGDLFSSALINSIGIGLITTVIAVVLGAMAAYAVARLEFPGKRLLIGAALLITMFPSISLVTPLFNIERAIGLFDTWPGLILPYITFALPLAIYTLSAFFREIPWDLEKAAKMDGATPGQAFRKVIVPLAAPGLVTAAILVFIFAWNDLLLALSLTATKAAITAPVAIANFTGSSQFEEPTGSIAAGAIVITIPIIVFVLIFQRRIVAGLTSGAVKG.

The next 6 helical transmembrane spans lie at 8–28 (YWAV…LWIF), 70–90 (IGIG…AAYA), 102–122 (LIGA…TPLF), 137–157 (LILP…SAFF), 182–202 (VIVP…FIFA), and 239–259 (GSIA…VLIF). The ABC transmembrane type-1 domain occupies 66–259 (LINSIGIGLI…IPIIVFVLIF (194 aa)).

Belongs to the binding-protein-dependent transport system permease family. In terms of assembly, the complex is composed of two ATP-binding proteins (SugC), two transmembrane proteins (Suga and SugB) and a solute-binding protein (LpqY).

The protein resides in the cell inner membrane. Part of the ABC transporter complex LpqY-SugA-SugB-SugC, which is highly specific for uptake of trehalose. Involved in the recycling of extracellular trehalose released from trehalose-containing molecules synthesized by M.tuberculosis. Trehalose uptake is essential for virulence. Probably responsible for the translocation of the substrate across the membrane. The protein is Trehalose transport system permease protein SugB (sugB) of Mycobacterium tuberculosis (strain CDC 1551 / Oshkosh).